We begin with the raw amino-acid sequence, 216 residues long: Uracil phosphoribosyltransferase (216 aa).

5-phospho-alpha-D-ribose 1-diphosphate contacts are provided by residues Arg85, Arg110, and 135-143; that span reads DPMVATGYS. Residues Ile200 and 205–207 each bind uracil; that span reads GDA. 5-phospho-alpha-D-ribose 1-diphosphate is bound at residue Asp206.

This sequence belongs to the UPRTase family. The cofactor is Mg(2+).

It carries out the reaction UMP + diphosphate = 5-phospho-alpha-D-ribose 1-diphosphate + uracil. It participates in pyrimidine metabolism; UMP biosynthesis via salvage pathway; UMP from uracil: step 1/1. Allosterically activated by GTP. Functionally, catalyzes the conversion of uracil and 5-phospho-alpha-D-ribose 1-diphosphate (PRPP) to UMP and diphosphate. This is Uracil phosphoribosyltransferase from Paraburkholderia phytofirmans (strain DSM 17436 / LMG 22146 / PsJN) (Burkholderia phytofirmans).